Reading from the N-terminus, the 341-residue chain is UDP-3-O-acylglucosamine N-acyltransferase (341 aa).

Histidine 241 functions as the Proton acceptor in the catalytic mechanism.

This sequence belongs to the transferase hexapeptide repeat family. LpxD subfamily. Homotrimer.

The catalysed reaction is a UDP-3-O-[(3R)-3-hydroxyacyl]-alpha-D-glucosamine + a (3R)-hydroxyacyl-[ACP] = a UDP-2-N,3-O-bis[(3R)-3-hydroxyacyl]-alpha-D-glucosamine + holo-[ACP] + H(+). It functions in the pathway bacterial outer membrane biogenesis; LPS lipid A biosynthesis. In terms of biological role, catalyzes the N-acylation of UDP-3-O-acylglucosamine using 3-hydroxyacyl-ACP as the acyl donor. Is involved in the biosynthesis of lipid A, a phosphorylated glycolipid that anchors the lipopolysaccharide to the outer membrane of the cell. The polypeptide is UDP-3-O-acylglucosamine N-acyltransferase (Saccharophagus degradans (strain 2-40 / ATCC 43961 / DSM 17024)).